The sequence spans 332 residues: Mediator of RNA polymerase II transcription subunit 3 (332 aa).

Disordered stretches follow at residues 125 to 206 (EPVR…PGAT) and 221 to 242 (SPLN…TTPS). Over residues 132–143 (SPSYRRPSNRSS) the composition is skewed to low complexity. The span at 144-153 (ADTPSSNAPT) shows a compositional bias: polar residues. 2 stretches are compositionally biased toward low complexity: residues 155-166 (SAAVVSGAALVA) and 184-200 (PSVS…SGPA).

The protein belongs to the Mediator complex subunit 3 family. As to quaternary structure, component of the Mediator complex.

Its subcellular location is the nucleus. In terms of biological role, component of the Mediator complex, a coactivator involved in regulated gene transcription of nearly all RNA polymerase II-dependent genes. Mediator functions as a bridge to convey information from gene-specific regulatory proteins to the basal RNA polymerase II transcription machinery. Mediator is recruited to promoters by direct interactions with regulatory proteins and serves as a scaffold for the assembly of a functional preinitiation complex with RNA polymerase II and the general transcription factors. The protein is Mediator of RNA polymerase II transcription subunit 3 (PGD1) of Eremothecium gossypii (strain ATCC 10895 / CBS 109.51 / FGSC 9923 / NRRL Y-1056) (Yeast).